Consider the following 358-residue polypeptide: MLWLDQYRPKTLASLDYHKQLSERLISLSSTNEFPHLLVYGPSGAGKKTRVVAILRELYGPGSEKLKIDQRTFLTPSSKKLQINIVSSLHHLEITPSDVGNYDRVIMQELLKDVAQSAQVDLQAKKIFKVVVINVADELTRDAQAALRRTMEKYSNNIRLILIANSTSKIIEPIRSRTLMVRVAAPTPEEIILVMSKILTAQGLEAPDSLLNNIANNCDRNLRKAILLLETVHAKSPGNKQLIDTGAQLPLPDWQTFIQQVGDSMLQEQSPARILAVRSMLYDLLSHCIPPTTILKELLSFFLSKVDTKLHPYLIQAAANYEHRTRMGNKSIFHLEAFVAYFMKVYAMLQLGMELPSY.

This sequence belongs to the activator 1 small subunits family. As to quaternary structure, heteropentamer of subunits rfc1, rfc2, rfc3, rfc4 and rfc5 that forms a complex (RFC) with PCNA in the presence of ATP. Two other complexes exist where rfc1 can be replaced by either ctf18 or elg1 to form the ctf18-RFC or the elg1-RFC complexes respectively.

The protein resides in the nucleus. In terms of biological role, the elongation of primed DNA templates by DNA polymerase delta and epsilon requires the action of the accessory proteins PCNA and activator 1. This is Replication factor C subunit 5 (rfc5) from Schizosaccharomyces pombe (strain 972 / ATCC 24843) (Fission yeast).